A 95-amino-acid chain; its full sequence is Co-chaperonin GroES (95 aa).

Belongs to the GroES chaperonin family. Heptamer of 7 subunits arranged in a ring. Interacts with the chaperonin GroEL.

The protein localises to the cytoplasm. Functionally, together with the chaperonin GroEL, plays an essential role in assisting protein folding. The GroEL-GroES system forms a nano-cage that allows encapsulation of the non-native substrate proteins and provides a physical environment optimized to promote and accelerate protein folding. GroES binds to the apical surface of the GroEL ring, thereby capping the opening of the GroEL channel. This is Co-chaperonin GroES from Cereibacter sphaeroides (strain ATCC 17025 / ATH 2.4.3) (Rhodobacter sphaeroides).